The chain runs to 1079 residues: Adhesion G-protein coupled receptor F3 (1079 aa).

The first 25 residues, Met1–Ala25, serve as a signal peptide directing secretion. Residues Ser26–Gln775 lie on the Extracellular side of the membrane. N-linked (GlcNAc...) asparagine glycans are attached at residues Asn188, Asn264, Asn301, Asn382, Asn441, and Asn648. Residues His599–Pro765 form the GAIN-B domain. 2 disulfides stabilise this stretch: Cys715–Cys747 and Cys734–Cys749. Positions Cys715–Pro765 are GPS. A helical membrane pass occupies residues Val776–Trp796. Residues Arg797–Ala811 lie on the Cytoplasmic side of the membrane. A helical membrane pass occupies residues Leu812 to Leu832. The Extracellular portion of the chain corresponds to Ser833 to Leu851. The helical transmembrane segment at Tyr852–Phe874 threads the bilayer. Over His875–Arg881 the chain is Cytoplasmic. The chain crosses the membrane as a helical span at residues Val882–Leu902. The Extracellular portion of the chain corresponds to Gly903 to Thr928. Residues Phe929–Leu949 traverse the membrane as a helical segment. Residues Lys950–Lys973 lie on the Cytoplasmic side of the membrane. A helical transmembrane segment spans residues Ala974–Leu994. Residues Glu995–His1002 lie on the Extracellular side of the membrane. Residues Tyr1003–Met1023 traverse the membrane as a helical segment. Topologically, residues Asp1024–Ser1079 are cytoplasmic.

It belongs to the G-protein coupled receptor 2 family. Adhesion G-protein coupled receptor (ADGR) subfamily. As to quaternary structure, heterodimer of 2 chains generated by proteolytic processing; the large extracellular N-terminal fragment and the membrane-bound C-terminal fragment predominantly remain associated and non-covalently linked. In terms of processing, autoproteolytically processed at the GPS region of the GAIN-B domain; this cleavage modulates receptor activity.

The protein resides in the membrane. Orphan receptor. The polypeptide is Adhesion G-protein coupled receptor F3 (ADGRF3) (Homo sapiens (Human)).